Reading from the N-terminus, the 176-residue chain is Large ribosomal subunit protein eL20 (176 aa).

It belongs to the eukaryotic ribosomal protein eL20 family. In terms of assembly, component of the large ribosomal subunit.

It localises to the cytoplasm. Component of the large ribosomal subunit. The ribosome is a large ribonucleoprotein complex responsible for the synthesis of proteins in the cell. The chain is Large ribosomal subunit protein eL20 (rpl18a) from Ictalurus punctatus (Channel catfish).